The following is a 140-amino-acid chain: Large ribosomal subunit protein uL16 (140 aa).

The segment covering 1–17 (MPLMPKRVKHRKMHRGS) has biased composition (basic residues). The disordered stretch occupies residues 1 to 21 (MPLMPKRVKHRKMHRGSRSGN).

The protein belongs to the universal ribosomal protein uL16 family. As to quaternary structure, part of the 50S ribosomal subunit.

Its function is as follows. Binds 23S rRNA and is also seen to make contacts with the A and possibly P site tRNAs. The sequence is that of Large ribosomal subunit protein uL16 from Akkermansia muciniphila (strain ATCC BAA-835 / DSM 22959 / JCM 33894 / BCRC 81048 / CCUG 64013 / CIP 107961 / Muc).